We begin with the raw amino-acid sequence, 179 residues long: Sec-independent protein translocase protein TatB (179 aa).

A helical membrane pass occupies residues 1–21 (MLDLGLSKMALIGVVALVVLG). Over residues 101-115 (GAAGDAGSVGSPGSD) the composition is skewed to low complexity. The segment at 101–134 (GAAGDAGSVGSPGSDTPAAPSWRGSSAALAPKRR) is disordered.

Belongs to the TatB family. In terms of assembly, the Tat system comprises two distinct complexes: a TatABC complex, containing multiple copies of TatA, TatB and TatC subunits, and a separate TatA complex, containing only TatA subunits. Substrates initially bind to the TatABC complex, which probably triggers association of the separate TatA complex to form the active translocon.

The protein resides in the cell inner membrane. Part of the twin-arginine translocation (Tat) system that transports large folded proteins containing a characteristic twin-arginine motif in their signal peptide across membranes. Together with TatC, TatB is part of a receptor directly interacting with Tat signal peptides. TatB may form an oligomeric binding site that transiently accommodates folded Tat precursor proteins before their translocation. The polypeptide is Sec-independent protein translocase protein TatB (Burkholderia orbicola (strain AU 1054)).